The following is a 312-amino-acid chain: uncharacterized protein (312 aa).

It belongs to the asfivirus CP312R family.

The protein localises to the virion. This is an uncharacterized protein from African swine fever virus (isolate Warthog/Namibia/Wart80/1980) (ASFV).